The primary structure comprises 358 residues: B3 domain-containing transcription factor NGA3 (358 aa).

Residues 1–14 (MDLSLAPTTTTSSD) are compositionally biased toward polar residues. The interval 1-45 (MDLSLAPTTTTSSDQEQDRDQELTSNIGASSSSGPSGNNNNLPMM) is disordered. Positions 25–45 (SNIGASSSSGPSGNNNNLPMM) are enriched in low complexity. The TF-B3 DNA-binding region spans 56–162 (FDKVVTPSDV…KLYIDWRHRP (107 aa)). Residues 310-358 (EIGASSSSSSALRLNLSTDHDDDNDDGDDGDDDQFAKKGKSSLSLNFNP) are disordered. Residues 329-342 (HDDDNDDGDDGDDD) show a composition bias toward acidic residues.

It localises to the nucleus. In terms of biological role, regulates lateral organ growth. Functionally redundant with NGA1, NGA2 and NGA4. The chain is B3 domain-containing transcription factor NGA3 (NGA3) from Arabidopsis thaliana (Mouse-ear cress).